The following is a 140-amino-acid chain: Cysteine protease inhibitor 6 (140 aa).

Cys-103 and Cys-109 are oxidised to a cystine.

The protein belongs to the protease inhibitor I3 (leguminous Kunitz-type inhibitor) family.

It is found in the vacuole. Its function is as follows. Inhibitor of cysteine proteases. May protect the plant by inhibiting proteases of invading organisms. The protein is Cysteine protease inhibitor 6 of Solanum tuberosum (Potato).